Consider the following 343-residue polypeptide: N-acetyl-gamma-glutamyl-phosphate reductase (343 aa).

Cys-148 is an active-site residue.

Belongs to the NAGSA dehydrogenase family. Type 1 subfamily.

It localises to the cytoplasm. It catalyses the reaction N-acetyl-L-glutamate 5-semialdehyde + phosphate + NADP(+) = N-acetyl-L-glutamyl 5-phosphate + NADPH + H(+). Its pathway is amino-acid biosynthesis; L-arginine biosynthesis; N(2)-acetyl-L-ornithine from L-glutamate: step 3/4. Its function is as follows. Catalyzes the NADPH-dependent reduction of N-acetyl-5-glutamyl phosphate to yield N-acetyl-L-glutamate 5-semialdehyde. The protein is N-acetyl-gamma-glutamyl-phosphate reductase of Caldicellulosiruptor saccharolyticus (strain ATCC 43494 / DSM 8903 / Tp8T 6331).